The following is a 77-amino-acid chain: Translation initiation factor IF-1, chloroplastic (77 aa).

Residues 1-71 form the S1-like domain; that stretch reads MKEQKWVHEG…TRGRIIYRLR (71 aa).

The protein belongs to the IF-1 family. As to quaternary structure, component of the 30S ribosomal translation pre-initiation complex which assembles on the 30S ribosome in the order IF-2 and IF-3, IF-1 and N-formylmethionyl-tRNA(fMet); mRNA recruitment can occur at any time during PIC assembly.

It is found in the plastid. The protein localises to the chloroplast. In terms of biological role, one of the essential components for the initiation of protein synthesis. Stabilizes the binding of IF-2 and IF-3 on the 30S subunit to which N-formylmethionyl-tRNA(fMet) subsequently binds. Helps modulate mRNA selection, yielding the 30S pre-initiation complex (PIC). Upon addition of the 50S ribosomal subunit IF-1, IF-2 and IF-3 are released leaving the mature 70S translation initiation complex. This chain is Translation initiation factor IF-1, chloroplastic, found in Cercidiphyllum japonicum (Katsura tree).